We begin with the raw amino-acid sequence, 427 residues long: MDYSKSKQAFKEAVNLMPGGVNSPVRAFKSVDMDPIFMERGKGSKIYDIDGNEYIDYVLSWGPLILGHANDTVTGALNKAVLNGTSFGAPTELENKMAELVIERVPSIEMVRMVSSGTEATLAALRLARGFTGKNKILKFIGCYHGHSDSLLIKAGSGVATLGLPDSPGVPKGTAENTITVHYNDLDAVKLAFEQFGDDIAGVIVEPVAGNMGVVPPVEGFLEGLREITTEHGALLIFDEVMTGFRVGYNCAQGYFGVIPDLTCLGKVIGGGLPVGAFGGRKDIMEHIAPSGPVYQAGTLSGNPLAMTGGYYTLSQLTPESYEYFNHLGDMLEAGLTDVFAKHNVPITINRAGSMIGFFLNEEKVTNFEIASKSDLKLFAAMYKEMANNGVFLPPSQFEGMFLSTEHTEEDIQKTINAFDNSLTVIL.

At Lys-267 the chain carries N6-(pyridoxal phosphate)lysine.

The protein belongs to the class-III pyridoxal-phosphate-dependent aminotransferase family. HemL subfamily. Homodimer. Pyridoxal 5'-phosphate is required as a cofactor.

It localises to the cytoplasm. The catalysed reaction is (S)-4-amino-5-oxopentanoate = 5-aminolevulinate. It participates in porphyrin-containing compound metabolism; protoporphyrin-IX biosynthesis; 5-aminolevulinate from L-glutamyl-tRNA(Glu): step 2/2. This chain is Glutamate-1-semialdehyde 2,1-aminomutase 1, found in Macrococcus caseolyticus (strain JCSC5402) (Macrococcoides caseolyticum).